Reading from the N-terminus, the 597-residue chain is Pentatricopeptide repeat-containing protein At2g21090 (597 aa).

13 PPR repeats span residues 45 to 79 (PFDL…GFKR), 81 to 111 (NTLL…MHLR), 112 to 142 (NLYS…MPER), 143 to 177 (DVVS…GIKF), 178 to 212 (NEFS…GFLS), 213 to 243 (NVVL…MTVK), 244 to 274 (DIHI…MPEK), 275 to 309 (NPVS…GVKP), 310 to 344 (EQFT…NVRP), 345 to 375 (NAIV…CDDK), 377 to 411 (DCVF…RVQP), 412 to 447 (NRTT…GIVP), and 448 to 478 (DQEH…MPFE). Residues 483 to 558 (IWNAILGVCR…EKAVSWIEIE (76 aa)) are type E motif. The interval 559-591 (KKVEAFTVSDGSHAHARKEEIYFILHNLAAVIE) is type E(+) motif.

This sequence belongs to the PPR family. PCMP-E subfamily.

This is Pentatricopeptide repeat-containing protein At2g21090 (PCMP-E48) from Arabidopsis thaliana (Mouse-ear cress).